A 578-amino-acid polypeptide reads, in one-letter code: Ketol-acid reductoisomerase, chloroplastic (578 aa).

A chloroplast-targeting transit peptide spans 1-52; the sequence is MAASTTLALSHPKTLAAAAAAAPKAPTAPAAVSFPVSHAACAPLAARRRAVT. A KARI N-terminal Rossmann domain is found at 90–288; it reads VRGGRNLFPL…ALGSPFTFAT (199 aa). NADP(+) contacts are provided by residues 111 to 118, 144 to 149, and 183 to 187; these read GVIGWGSQ, RKGSKS, and SDAAQ. Histidine 208 is a catalytic residue. KARI C-terminal knotted domains lie at 289–437 and 438–574; these read TLEQ…RPEN and DLGP…RPEL. Mg(2+) contacts are provided by aspartate 297, glutamate 301, glutamate 474, and glutamate 478. Residue serine 500 coordinates substrate.

Belongs to the ketol-acid reductoisomerase family. Homodimer. Mg(2+) serves as cofactor.

Its subcellular location is the plastid. It is found in the chloroplast. It carries out the reaction (2R)-2,3-dihydroxy-3-methylbutanoate + NADP(+) = (2S)-2-acetolactate + NADPH + H(+). It catalyses the reaction (2R,3R)-2,3-dihydroxy-3-methylpentanoate + NADP(+) = (S)-2-ethyl-2-hydroxy-3-oxobutanoate + NADPH + H(+). The protein operates within amino-acid biosynthesis; L-isoleucine biosynthesis; L-isoleucine from 2-oxobutanoate: step 2/4. It participates in amino-acid biosynthesis; L-valine biosynthesis; L-valine from pyruvate: step 2/4. In Oryza sativa subsp. japonica (Rice), this protein is Ketol-acid reductoisomerase, chloroplastic.